We begin with the raw amino-acid sequence, 496 residues long: Fusarielin biosynthesis cluster transcription factor FSL7 (496 aa).

Residues 16–46 constitute a DNA-binding region (zn(2)-C6 fungal-type); that stretch reads CDRCHELKIRCTRTGGTESRCDRCEKNDIDC. 5 disordered regions span residues 57-102, 189-224, 281-307, 348-379, and 444-470; these read PKSQ…SINS, RSIN…EDQM, ANHT…QSRS, GSTS…KPRT, and MTRE…AQAA. Polar residues-rich tracts occupy residues 65–89 and 207–218; these read GPNT…QEQM and ELQSTQSASGSP. Positions 281–294 are enriched in low complexity; that stretch reads ANHTSSSSSSNSTT. Residues 355–379 are compositionally biased toward polar residues; the sequence is YNDTTAHPSSASLPSQTGGPTKPRT. Residues 444–460 show a composition bias toward basic and acidic residues; the sequence is MTREQHVSTGHGPDRHT.

It localises to the nucleus. In terms of biological role, transcription regulator that specifically up-regulates the gene cluster that mediates the biosynthesis of fusarielins F, G and H, decaketide compounds with 5 methylations and a decaline core that act as mycoestrogens as they stimulate growth of MCF-7 breast cancer cells. Probably binds the 5'-CGGNNNCCG-3' motif present in the promoter of all the cluster genes. The polypeptide is Fusarielin biosynthesis cluster transcription factor FSL7 (Gibberella zeae (strain ATCC MYA-4620 / CBS 123657 / FGSC 9075 / NRRL 31084 / PH-1) (Wheat head blight fungus)).